Consider the following 218-residue polypeptide: MQADFWHARWANNQIGFHLDEINPYLMRHLSRLRLQAGEQILVPLCGKTLDLAWLAAQGLEVLGVELSEKAVSDFFEEHDLRPEIDQLDGFRRYRVAGITLLQGDFFALQAEHLAQCRAFYDRAALIALPPEMRERYAGHLQAVLPTRSLGLLVTIDYPQAEMAGPPFAVPDEEVRGYYAGGWRIEELERGDVLGVNWKFLERGVSWLDEAVYLLERG.

S-adenosyl-L-methionine is bound by residues W10, L45, E66, and R123.

It belongs to the class I-like SAM-binding methyltransferase superfamily. TPMT family.

Its subcellular location is the cytoplasm. The catalysed reaction is S-adenosyl-L-methionine + a thiopurine = S-adenosyl-L-homocysteine + a thiopurine S-methylether.. In Pseudomonas aeruginosa (strain LESB58), this protein is Thiopurine S-methyltransferase.